Here is a 166-residue protein sequence, read N- to C-terminus: Photosystem I assembly protein Ycf3 (166 aa).

TPR repeat units lie at residues alanine 35–proline 68, serine 72–leucine 105, and glycine 120–asparagine 153.

It belongs to the Ycf3 family.

The protein localises to the plastid. The protein resides in the chloroplast thylakoid membrane. In terms of biological role, essential for the assembly of the photosystem I (PSI) complex. May act as a chaperone-like factor to guide the assembly of the PSI subunits. This chain is Photosystem I assembly protein Ycf3, found in Oltmannsiellopsis viridis (Marine flagellate).